Here is a 424-residue protein sequence, read N- to C-terminus: Protein FAM43A (424 aa).

A compositionally biased stretch (acidic residues) spans 261–297 (QQEEELQEEEEEHLEDCLEEEEEEDGVGDGDPAEEEA). Disordered regions lie at residues 261-299 (QQEE…EAEA) and 382-424 (LLSG…PYSG). Over residues 382 to 394 (LLSGESTGSESSI) the composition is skewed to low complexity. Over residues 405–418 (SPGNPSGPADSTSL) the composition is skewed to polar residues.

The protein belongs to the FAM43 family.

The polypeptide is Protein FAM43A (Fam43a) (Mus musculus (Mouse)).